A 196-amino-acid polypeptide reads, in one-letter code: O-methyltransferase dpmpI (196 aa).

S-adenosyl-L-methionine contacts are provided by residues 127-128, D152, and 174-175; these read GG and SF. The interval 166–196 is disordered; the sequence is NGIEAVPHSFEDPQPIKSKSPRLDNLARERL. The span at 186-196 shows a compositional bias: basic and acidic residues; that stretch reads PRLDNLARERL.

It belongs to the class I-like SAM-binding methyltransferase superfamily. Cation-independent O-methyltransferase family.

It participates in secondary metabolite biosynthesis; terpenoid biosynthesis. In terms of biological role, O-methyltransferase; part of the gene cluster that mediates the biosynthesis of diterpenoid pyrones. The first step of the pathway is the synthesis of the alpha-pyrone moiety by the polyketide synthase dpmpA via condensation of one acetyl-CoA starter unit with 3 malonyl-CoA units and 2 methylations. The alpha-pyrone is then combined with geranylgeranyl pyrophosphate (GGPP) formed by the GGPP synthase dpmpD through the action of the prenyltransferase dpmpC to yield a linear alpha-pyrone diterpenoid. Subsequent steps in the diterpenoid pyrone biosynthetic pathway involve the decalin core formation, which is initiated by the epoxidation of the C10-C11 olefin by the FAD-dependent oxidoreductase dpmpE, and is followed by a cyclization cascade catalyzed by the terpene cyclase dpmpB. The short chain dehydrogenase/reductase dpmpG then oxidizes the 8S hydroxy group to a ketone and the short chain dehydrogenase/reductase dpmpH reduces the ketone to the 8R hydroxy group to yield higginsianin B. Higginsianin B is further methylated by the methyltransferase dpmpI to produce the intermediate named FDDP B. The cytochrome P450 monooxygenase dpmpJ then oxidizes the C-26 methyl to primary alcohol, producing the final diterpenoid pyrone with a C-26 primary alcohol on the gamma-pyrone moiety named FDDP C. This chain is O-methyltransferase dpmpI, found in Macrophomina phaseolina (strain MS6) (Charcoal rot fungus).